The chain runs to 192 residues: uncharacterized protein (192 aa).

Residues 29–160 (HRQAAVLIPI…PLDIYRRGDS (132 aa)) form the Nudix hydrolase domain. Positions 67-89 (GAVDDTDTSVIAAALREAEEEVA) match the Nudix box motif. Mg(2+) contacts are provided by Glu-83 and Glu-87.

This sequence belongs to the Nudix hydrolase family. PCD1 subfamily. Mn(2+) is required as a cofactor. It depends on Mg(2+) as a cofactor.

Probably mediates the hydrolysis of some nucleoside diphosphate derivatives. This is an uncharacterized protein from Escherichia coli O7:K1 (strain IAI39 / ExPEC).